A 414-amino-acid chain; its full sequence is Imidazolonepropionase (414 aa).

Fe(3+) is bound by residues H95 and H97. Zn(2+) contacts are provided by H95 and H97. 4-imidazolone-5-propanoate is bound by residues R104, Y162, and H189. Residue Y162 participates in N-formimidoyl-L-glutamate binding. Fe(3+) is bound at residue H252. H252 serves as a coordination point for Zn(2+). Q255 provides a ligand contact to 4-imidazolone-5-propanoate. Residue D326 coordinates Fe(3+). D326 is a Zn(2+) binding site. N-formimidoyl-L-glutamate is bound by residues N328 and G330. A 4-imidazolone-5-propanoate-binding site is contributed by S331.

Belongs to the metallo-dependent hydrolases superfamily. HutI family. Zn(2+) serves as cofactor. Fe(3+) is required as a cofactor.

It localises to the cytoplasm. The catalysed reaction is 4-imidazolone-5-propanoate + H2O = N-formimidoyl-L-glutamate. It functions in the pathway amino-acid degradation; L-histidine degradation into L-glutamate; N-formimidoyl-L-glutamate from L-histidine: step 3/3. Its function is as follows. Catalyzes the hydrolytic cleavage of the carbon-nitrogen bond in imidazolone-5-propanoate to yield N-formimidoyl-L-glutamate. It is the third step in the universal histidine degradation pathway. The chain is Imidazolonepropionase from Streptomyces avermitilis (strain ATCC 31267 / DSM 46492 / JCM 5070 / NBRC 14893 / NCIMB 12804 / NRRL 8165 / MA-4680).